Reading from the N-terminus, the 201-residue chain is Pyridoxal 5'-phosphate synthase subunit PdxT (201 aa).

Residue 51 to 53 (GES) coordinates L-glutamine. C83 serves as the catalytic Nucleophile. Residues R112 and 141-142 (IR) each bind L-glutamine. Catalysis depends on charge relay system residues H182 and E184.

The protein belongs to the glutaminase PdxT/SNO family. As to quaternary structure, in the presence of PdxS, forms a dodecamer of heterodimers. Only shows activity in the heterodimer.

The enzyme catalyses aldehydo-D-ribose 5-phosphate + D-glyceraldehyde 3-phosphate + L-glutamine = pyridoxal 5'-phosphate + L-glutamate + phosphate + 3 H2O + H(+). The catalysed reaction is L-glutamine + H2O = L-glutamate + NH4(+). Its pathway is cofactor biosynthesis; pyridoxal 5'-phosphate biosynthesis. In terms of biological role, catalyzes the hydrolysis of glutamine to glutamate and ammonia as part of the biosynthesis of pyridoxal 5'-phosphate. The resulting ammonia molecule is channeled to the active site of PdxS. The polypeptide is Pyridoxal 5'-phosphate synthase subunit PdxT (Thermobifida fusca (strain YX)).